The following is a 425-amino-acid chain: Voltage-dependent calcium channel gamma-8 subunit (425 aa).

The next 4 membrane-spanning stretches (helical) occupy residues V19–I39, S129–S149, I158–I178, and F208–I228. Residues S252 and S255 each carry the phosphoserine modification. Residues R272 to I304 are disordered. Residues S277 to R287 are compositionally biased toward low complexity. Residues V318–G338 traverse the membrane as a helical segment. The segment covering A343–G354 has biased composition (gly residues). Disordered regions lie at residues A343–F365 and G377–V425. The segment covering P387 to P401 has biased composition (pro residues). Residues A412 to V425 are compositionally biased toward polar residues.

It belongs to the PMP-22/EMP/MP20 family. CACNG subfamily. In terms of assembly, interacts with CACNA1C. Identified in a complex with the L-type calcium channel subunits CACNA1C, CACNA2D1 and either CACNB1 or CACNB2. Acts as an auxiliary subunit for AMPA-selective glutamate receptors (AMPARs). Found in a complex with GRIA1, GRIA2, GRIA3, GRIA4, CNIH2, CNIH3, CACNG2, CACNG3, CACNG4, CACNG5 and CACNG7. Interacts with CNIH2. Found in a complex with GRIA1, GRIA2, GRIA3, GRIA4, DLG4 and CNIH2. In terms of processing, palmitoylated. Probably palmitoylated by ZDHHC3 and ZDHHC7. Detected in heart left ventricle.

It is found in the cell membrane. The protein resides in the postsynaptic density membrane. Regulates the activity of L-type calcium channels that contain CACNA1C as pore-forming subunit. Regulates the trafficking and gating properties of AMPA-selective glutamate receptors (AMPARs). Promotes their targeting to the cell membrane and synapses and modulates their gating properties by slowing their rates of activation, deactivation and desensitization and by mediating their resensitization. Does not show subunit-specific AMPA receptor regulation and regulates all AMPAR subunits. This chain is Voltage-dependent calcium channel gamma-8 subunit, found in Homo sapiens (Human).